The sequence spans 446 residues: tRNA modification GTPase MnmE (446 aa).

Residues arginine 24, glutamate 81, and lysine 120 each coordinate (6S)-5-formyl-5,6,7,8-tetrahydrofolate. The 153-residue stretch at glycine 216–leucine 368 folds into the TrmE-type G domain. Asparagine 226 lines the K(+) pocket. GTP is bound by residues asparagine 226–serine 231, threonine 245–threonine 251, and aspartate 270–glycine 273. Serine 230 contributes to the Mg(2+) binding site. K(+)-binding residues include threonine 245, valine 247, and threonine 250. Residue threonine 251 participates in Mg(2+) binding. Lysine 446 contacts (6S)-5-formyl-5,6,7,8-tetrahydrofolate.

Belongs to the TRAFAC class TrmE-Era-EngA-EngB-Septin-like GTPase superfamily. TrmE GTPase family. In terms of assembly, homodimer. Heterotetramer of two MnmE and two MnmG subunits. Requires K(+) as cofactor.

It localises to the cytoplasm. In terms of biological role, exhibits a very high intrinsic GTPase hydrolysis rate. Involved in the addition of a carboxymethylaminomethyl (cmnm) group at the wobble position (U34) of certain tRNAs, forming tRNA-cmnm(5)s(2)U34. The sequence is that of tRNA modification GTPase MnmE from Xanthomonas campestris pv. campestris (strain B100).